Reading from the N-terminus, the 100-residue chain is C-X-C motif chemokine 11 (100 aa).

The signal sequence occupies residues 1–21; the sequence is MNRKVTAIALAAIIWATAAQG. 2 cysteine pairs are disulfide-bonded: cysteine 30-cysteine 57 and cysteine 32-cysteine 74.

This sequence belongs to the intercrine alpha (chemokine CxC) family. In terms of assembly, interacts with TNFAIP6 (via Link domain).

Its subcellular location is the secreted. Chemotactic for interleukin-activated T-cells but not unstimulated T-cells, neutrophils or monocytes. Induces calcium release in activated T-cells. Binds to CXCR3. May play an important role in CNS diseases which involve T-cell recruitment. May play a role in skin immune responses. This is C-X-C motif chemokine 11 (Cxcl11) from Mus musculus (Mouse).